Reading from the N-terminus, the 347-residue chain is S-adenosylmethionine:tRNA ribosyltransferase-isomerase (347 aa).

The protein belongs to the QueA family. Monomer.

The protein localises to the cytoplasm. The enzyme catalyses 7-aminomethyl-7-carbaguanosine(34) in tRNA + S-adenosyl-L-methionine = epoxyqueuosine(34) in tRNA + adenine + L-methionine + 2 H(+). The protein operates within tRNA modification; tRNA-queuosine biosynthesis. Its function is as follows. Transfers and isomerizes the ribose moiety from AdoMet to the 7-aminomethyl group of 7-deazaguanine (preQ1-tRNA) to give epoxyqueuosine (oQ-tRNA). This Xylella fastidiosa (strain 9a5c) protein is S-adenosylmethionine:tRNA ribosyltransferase-isomerase.